The primary structure comprises 173 residues: Shikimate kinase (173 aa).

Residue 14 to 19 participates in ATP binding; it reads GAGKST. Serine 18 lines the Mg(2+) pocket. 3 residues coordinate substrate: aspartate 36, arginine 60, and glycine 82. Arginine 120 is an ATP binding site. Arginine 140 serves as a coordination point for substrate. An ATP-binding site is contributed by glutamine 157.

This sequence belongs to the shikimate kinase family. In terms of assembly, monomer. Mg(2+) is required as a cofactor.

It is found in the cytoplasm. It catalyses the reaction shikimate + ATP = 3-phosphoshikimate + ADP + H(+). Its pathway is metabolic intermediate biosynthesis; chorismate biosynthesis; chorismate from D-erythrose 4-phosphate and phosphoenolpyruvate: step 5/7. Its function is as follows. Catalyzes the specific phosphorylation of the 3-hydroxyl group of shikimic acid using ATP as a cosubstrate. This is Shikimate kinase from Buchnera aphidicola subsp. Schizaphis graminum (strain Sg).